Reading from the N-terminus, the 401-residue chain is 1-deoxy-D-xylulose 5-phosphate reductoisomerase (401 aa).

The NADPH site is built by Thr-10, Gly-11, Ser-12, Ile-13, Asn-38, and Asn-124. Lys-125 is a binding site for 1-deoxy-D-xylulose 5-phosphate. NADPH is bound at residue Glu-126. Asp-150 is a Mn(2+) binding site. The 1-deoxy-D-xylulose 5-phosphate site is built by Ser-151, Glu-152, Ser-186, and His-209. Glu-152 serves as a coordination point for Mn(2+). Gly-215 lines the NADPH pocket. 4 residues coordinate 1-deoxy-D-xylulose 5-phosphate: Ser-222, Asn-227, Lys-228, and Glu-231. Glu-231 lines the Mn(2+) pocket.

Belongs to the DXR family. It depends on Mg(2+) as a cofactor. Requires Mn(2+) as cofactor.

The catalysed reaction is 2-C-methyl-D-erythritol 4-phosphate + NADP(+) = 1-deoxy-D-xylulose 5-phosphate + NADPH + H(+). The protein operates within isoprenoid biosynthesis; isopentenyl diphosphate biosynthesis via DXP pathway; isopentenyl diphosphate from 1-deoxy-D-xylulose 5-phosphate: step 1/6. Functionally, catalyzes the NADPH-dependent rearrangement and reduction of 1-deoxy-D-xylulose-5-phosphate (DXP) to 2-C-methyl-D-erythritol 4-phosphate (MEP). The sequence is that of 1-deoxy-D-xylulose 5-phosphate reductoisomerase from Vibrio campbellii (strain ATCC BAA-1116).